We begin with the raw amino-acid sequence, 1062 residues long: Roc-COR-CHAT protease (1062 aa).

LRR repeat units lie at residues 70-94 (LAGLQGLYLAENDFSSLQLPGHLQQ), 95-116 (LRLLHLADNKELKTLEFAGSMP), 115-141 (MPLLEEIDLSDSGIQTLQLPACPALQK), 142-159 (LDVSRSKLEAFSFASACP), 160-180 (ALWWLDLSGNGELRKLKMPAG), 181-203 (FKALQYLYLYKSGIQELQINGKL), 204-226 (PKLVVLDLEGNQLKQWPEKLLLP), and 228-249 (GLETLYLEGNPIENIPETIRGS). The COR domain maps to 470–660 (DWLGVMEELQ…GLMWKDNVVF (191 aa)). A disordered region spans residues 836–856 (ERDNDHTGLSDSSDQEDETFT). Residues His931 and Cys980 contribute to the active site.

In terms of biological role, a dedicated protease for substrate gasdermin bGSDM; cleaves the bGSDM precursor, releasing the pore-forming moiety, which integrates into the membrane and triggers cell death. Probably involved in defense against bacteriophages. Expression of bGSDM and this neighboring protease is highly toxic in E.coli. The polypeptide is Roc-COR-CHAT protease (Unknown prokaryotic organism).